The chain runs to 72 residues: DNA-directed RNA polymerase subunit epsilon (72 aa).

The protein belongs to the RNA polymerase subunit epsilon family. In terms of assembly, RNAP is composed of a core of 2 alpha, a beta and a beta' subunit. The core is associated with a delta subunit, and at least one of epsilon or omega. When a sigma factor is associated with the core the holoenzyme is formed, which can initiate transcription.

It carries out the reaction RNA(n) + a ribonucleoside 5'-triphosphate = RNA(n+1) + diphosphate. A non-essential component of RNA polymerase (RNAP). The sequence is that of DNA-directed RNA polymerase subunit epsilon from Levilactobacillus brevis (strain ATCC 367 / BCRC 12310 / CIP 105137 / JCM 1170 / LMG 11437 / NCIMB 947 / NCTC 947) (Lactobacillus brevis).